The chain runs to 447 residues: Tubulin beta-5 chain (447 aa).

Residues Gln-11, Glu-69, Ser-138, Gly-142, Thr-143, Gly-144, Asn-204, and Asn-226 each coordinate GTP. Position 69 (Glu-69) interacts with Mg(2+). Residues 421–447 are disordered; it reads EYQQYQDATADDEEEDYGDEEEDEVAA. Positions 429 to 447 are enriched in acidic residues; that stretch reads TADDEEEDYGDEEEDEVAA.

Belongs to the tubulin family. Dimer of alpha and beta chains. A typical microtubule is a hollow water-filled tube with an outer diameter of 25 nm and an inner diameter of 15 nM. Alpha-beta heterodimers associate head-to-tail to form protofilaments running lengthwise along the microtubule wall with the beta-tubulin subunit facing the microtubule plus end conferring a structural polarity. Microtubules usually have 13 protofilaments but different protofilament numbers can be found in some organisms and specialized cells. It depends on Mg(2+) as a cofactor. As to expression, expressed in roots, leaf sheaths, and suspension cultured cells.

The protein resides in the cytoplasm. The protein localises to the cytoskeleton. In terms of biological role, tubulin is the major constituent of microtubules, a cylinder consisting of laterally associated linear protofilaments composed of alpha- and beta-tubulin heterodimers. Microtubules grow by the addition of GTP-tubulin dimers to the microtubule end, where a stabilizing cap forms. Below the cap, tubulin dimers are in GDP-bound state, owing to GTPase activity of alpha-tubulin. In Oryza sativa subsp. japonica (Rice), this protein is Tubulin beta-5 chain (TUBB5).